Here is a 306-residue protein sequence, read N- to C-terminus: Phospho-N-acetylmuramoyl-pentapeptide-transferase (306 aa).

A run of 10 helical transmembrane segments spans residues 1 to 21 (MDIY…IIFP), 49 to 69 (GTPT…GLIL), 75 to 95 (LIFT…VSIV), 104 to 124 (AWQK…TILQ), 130 to 150 (IFGI…LVSG), 160 to 180 (GIDG…MFFS), 182 to 202 (SSME…FLVY), 209 to 229 (VFMG…YALM), 234 to 254 (LSLL…ILQV), and 284 to 304 (IVGV…AFFL).

This sequence belongs to the glycosyltransferase 4 family. MraY subfamily. The cofactor is Mg(2+).

It is found in the cell inner membrane. It carries out the reaction UDP-N-acetyl-alpha-D-muramoyl-L-alanyl-gamma-D-glutamyl-meso-2,6-diaminopimeloyl-D-alanyl-D-alanine + di-trans,octa-cis-undecaprenyl phosphate = di-trans,octa-cis-undecaprenyl diphospho-N-acetyl-alpha-D-muramoyl-L-alanyl-D-glutamyl-meso-2,6-diaminopimeloyl-D-alanyl-D-alanine + UMP. It participates in cell wall biogenesis; peptidoglycan biosynthesis. Functionally, catalyzes the initial step of the lipid cycle reactions in the biosynthesis of the cell wall peptidoglycan: transfers peptidoglycan precursor phospho-MurNAc-pentapeptide from UDP-MurNAc-pentapeptide onto the lipid carrier undecaprenyl phosphate, yielding undecaprenyl-pyrophosphoryl-MurNAc-pentapeptide, known as lipid I. The sequence is that of Phospho-N-acetylmuramoyl-pentapeptide-transferase from Fervidobacterium nodosum (strain ATCC 35602 / DSM 5306 / Rt17-B1).